The following is a 1243-amino-acid chain: Serine/threonine-protein kinase/endoribonuclease IRE1 (1243 aa).

An N-terminal signal peptide occupies residues 1-35 (MMRRPPSQGRWSASHQKLLLAFAFILIPWLQLADA). Over 36 to 585 (QQQPQQPQIR…VKALPQSAAN (550 aa)) the chain is Lumenal. 2 disordered regions span residues 70-132 (HAAP…KPNY) and 149-172 (QPVR…GLAS). The span at 73-85 (PDVHPEAKFDTVN) shows a compositional bias: basic and acidic residues. A compositionally biased stretch (polar residues) spans 90 to 99 (QQSTASPQQH). The segment covering 163–172 (SSSAASGLAS) has biased composition (low complexity). N-linked (GlcNAc...) asparagine glycosylation is found at Asn-226, Asn-470, and Asn-554. Residues 586-606 (SVIDFVSNPILIIFLIGSLIY) traverse the membrane as a helical segment. Over 607-1243 (NEKKLRRSYH…FREYYEPAGL (637 aa)) the chain is Cytoplasmic. The segment at 638–765 (GDESGDDKDG…QSHENDPALT (128 aa)) is disordered. The segment covering 650–660 (PSSPSPRSQPQ) has biased composition (low complexity). Residues 674–693 (ERNAGDQDKVKDNRSLHDVS) are compositionally biased toward basic and acidic residues. The segment covering 732-749 (KKKKAHRGRRGGVKHRKG) has biased composition (basic residues). A Protein kinase domain is found at 809–1105 (VDTDVELGMG…SREVMAHPFF (297 aa)). Residues 815–823 (LGMGSNGTV) and Lys-837 each bind ATP. Positions 819, 837, 881, and 883 each coordinate ADP. Asp-931 (proton acceptor) is an active-site residue. Mg(2+) is bound by residues Asn-936 and Asp-953. Positions 1108–1240 (PKKRLAFLCD…TDRFREYYEP (133 aa)) constitute a KEN domain.

It belongs to the protein kinase superfamily. Ser/Thr protein kinase family. Requires Mg(2+) as cofactor. In terms of processing, autophosphorylated mainly on serine residues; phosphorylation enables nucleotide binding by the active site.

It is found in the endoplasmic reticulum membrane. It catalyses the reaction L-seryl-[protein] + ATP = O-phospho-L-seryl-[protein] + ADP + H(+). The catalysed reaction is L-threonyl-[protein] + ATP = O-phospho-L-threonyl-[protein] + ADP + H(+). Functionally, senses unfolded proteins in the lumen of the endoplasmic reticulum via its N-terminal domain which leads to enzyme auto-activation. The active endoribonuclease domain splices precursor mRNAs to produce their mature form which then induces transcription of UPR target genes. The chain is Serine/threonine-protein kinase/endoribonuclease IRE1 from Hypocrea jecorina (strain QM6a) (Trichoderma reesei).